Consider the following 256-residue polypeptide: Imidazole glycerol phosphate synthase subunit HisF (256 aa).

Residues Asp11 and Asp130 contribute to the active site.

It belongs to the HisA/HisF family. Heterodimer of HisH and HisF.

The protein resides in the cytoplasm. The catalysed reaction is 5-[(5-phospho-1-deoxy-D-ribulos-1-ylimino)methylamino]-1-(5-phospho-beta-D-ribosyl)imidazole-4-carboxamide + L-glutamine = D-erythro-1-(imidazol-4-yl)glycerol 3-phosphate + 5-amino-1-(5-phospho-beta-D-ribosyl)imidazole-4-carboxamide + L-glutamate + H(+). The protein operates within amino-acid biosynthesis; L-histidine biosynthesis; L-histidine from 5-phospho-alpha-D-ribose 1-diphosphate: step 5/9. Its function is as follows. IGPS catalyzes the conversion of PRFAR and glutamine to IGP, AICAR and glutamate. The HisF subunit catalyzes the cyclization activity that produces IGP and AICAR from PRFAR using the ammonia provided by the HisH subunit. This Thioalkalivibrio sulfidiphilus (strain HL-EbGR7) protein is Imidazole glycerol phosphate synthase subunit HisF.